Reading from the N-terminus, the 420-residue chain is Serine--tRNA ligase (420 aa).

227–229 (TSE) contributes to the L-serine binding site. ATP contacts are provided by residues 258–260 (RRE) and Val-274. An L-serine-binding site is contributed by Glu-281. Position 345–348 (345–348 (ELTS)) interacts with ATP. Thr-380 contacts L-serine.

This sequence belongs to the class-II aminoacyl-tRNA synthetase family. Type-1 seryl-tRNA synthetase subfamily. As to quaternary structure, homodimer. The tRNA molecule binds across the dimer.

It localises to the cytoplasm. It catalyses the reaction tRNA(Ser) + L-serine + ATP = L-seryl-tRNA(Ser) + AMP + diphosphate + H(+). It carries out the reaction tRNA(Sec) + L-serine + ATP = L-seryl-tRNA(Sec) + AMP + diphosphate + H(+). The protein operates within aminoacyl-tRNA biosynthesis; selenocysteinyl-tRNA(Sec) biosynthesis; L-seryl-tRNA(Sec) from L-serine and tRNA(Sec): step 1/1. In terms of biological role, catalyzes the attachment of serine to tRNA(Ser). Is also able to aminoacylate tRNA(Sec) with serine, to form the misacylated tRNA L-seryl-tRNA(Sec), which will be further converted into selenocysteinyl-tRNA(Sec). The polypeptide is Serine--tRNA ligase (Nocardia farcinica (strain IFM 10152)).